Reading from the N-terminus, the 87-residue chain is Acyl carrier protein TtuC (87 aa).

Positions 11 to 87 (ITAEDVQQWL…HALSQFIAAK (77 aa)) constitute a Carrier domain. Position 48 is an O-(pantetheine 4'-phosphoryl)serine (Ser48).

Pantetheine 4'-phosphate is required as a cofactor.

Its function is as follows. Carrier protein likely involved in the biosynthesis of a polyyne metabolite. Accepts as substrate the activated form of decanoic acid from TtuA. This is Acyl carrier protein TtuC from Teredinibacter turnerae (strain ATCC 39867 / T7901).